A 2353-amino-acid chain; its full sequence is MNIVRKLNLMIPWSIFLLHVLLFSLQEYICASSILMGTSKNGFNENRQKRALLAAQFEATSPRYFFHDAINWGESKIKGSCPYECLNGAFCSKTGTCDCQIFQALGTRCQIIPNMGNGRDGICKTWGQYHFETFDGIYYYFPGNCSYIFAKDCGDLEPRYTVWVHNSPKCLGSVYSCYRSISLFFSNQEEIRIYGHEIKKNGISLTLPQTIGQIFIEKLADYILVKTTFGFSLAWDGISGIYLKLSEDHKGKSCGLCGNYNDIQSDDFIILQEDYTEDIAMFANSWSVQTPDDTKCVLTPSDFPNPCSSGMPAFEAIFFKCQILLQFPFLSCHEYIDPYLYIASCVNDLCKTDDDETYCRAATEYARACSHAGYPIQDWRDDFPACTDKCDDSFVHRDCISCCPPTCTFEKQCLGSNLHCLDGCYCPDGLVMDNGTCISLENCPCGFHGLAYSVGSKIEQECTECVCVGGVWNCTEQDCPVQCSVVGDSHFTTFDGRHYSFIGMCQYILVKGTGKDKFTITLQKAPCEQNLGLVCLQSITLILEDDFNKQVTLGRGGQILTSPNQGFNLNGIVEIQTLSSLFILLKTTFGLKILFAIDGERIYIQLTSAWKRRTLGLCGTFNGNIRDDFLSPSGMIEGTPQLHANAWRVSSTCFAPVHVPVVDPCNINQQNIGYAAHCDVIHQELFAPCHIYISPGLYYQLCRHDACKCGSSCLCNALAHYAYLCGQHGVPIDFRTQISFCAVVCQKGMLYHHCSSFCLHSCISLSSPEQCSDDCAEGCNCPEGKFYEDTLNFCVPIFHCRCHYRGSVYQPGELIPTPSGLCQCSNGTVKCDELATPSAVHICPEGKEYFDCRFPDPELPAGGVNCETTCANLAMNFTCTPSSPCISGCVCAPGMAEHRGKCYVPESCPCIWKDWEYLSGEVIATPCYTCVCRRGMFNCTYYPCPAVCTIYGDRHYYSFDGLEYDYISDCQVFLIKSADDSDISVIAQNKKCFDNDIVCSKSVLISVGDTEIYLNDTPYKQKQSGFFLENKSTYQLWKAGYYIVVYFPEKDITILWDRKTTIHIKVGPQWKNKLSGLCGNFDKCTSNDMTTSNNLEVRNARVFGDSWALGQCESPDETIKPCEAHQNKFPYAKKECSILYSDIFASCRNVIDVTSFAKNCHEDTCNCNLGGDCECLCTSIAAYAYKCCQEGISIHWRSSTVCSLDCEYYNEGLGEGPYMLASYGQSGLVLGANMTSRSVFCLPRSSVHTSLFFYFMITPGLFKEKVSSLALVSLESAERPNYFLYVHDNDTLSLELWEANSAFHRRATFFHHQGLWIPGYSAFELYSKKGFFIIFTDSSVKASKYDDSEEFKHSSSFSIEEIQAAVPYRKMCEWRYEPCATPCFKTCSDPEALACKFLPPVEGCLPYCPKNMILDEVTLKCVYPRDCIPVIPTEPTLMPPAKPTVPMFTVWEMITPSDITVFDMLTPTTGLECEPQKFDPVYDCSQYICLNMEWQLYNWSLNCPKDVEMPDCGFRGRPVQVNSDICCPEWECPCRCSMLSELSIITFDGNNAALYSMASYILVRIPGEIIVAHIEKCSMNQNGNSLKKLAPSGRISGLCFKKLNVTTPIHKIIVNRLARKVEVDSIVVPLPFSSQELSIEDSGSMYVITTPAGLIIKWSHLTGIIDIHFGFRFNLSSYTEGLCGICNEDPDDDLRMQNGTIITNMEDIGLFIESWEIEKSFEVTMRRPVRNCTEHDCSQCIDLLNRRIFIPCHDKVSPEDFCEKMWINYTYFWNYECDALSAYVALCNKFDICIQWRTPDYCSLSCPEGKEYQPCVRPCEARTCLNQWFYGHTSCLNLREDCVCKVGTILHRPHSAQCIPEKECACTDSEDQPRTAGEIWNGGIDECTLYKCLENGSIIPIEPDCDEEPTPVCEREAEVVMGIIDKWTCCSKEVCGCDTTLCETSIPTCTNSQKLIVGHSPLSCCPQYKCECDPLKCPSISTPECREDQFMIQVRQEEPCCFSPFCVCESCTKPVPLCHDGEFLTVDLNSTHFCCPQYYCVCEPNLCPMPLLNCAEDMNLVKENVSGQCCPTWHCECNCENLIMPTCEVGEFTAIDHNFQSDCGCIQYLCEKDDVCVFQEVSVLNPGQSMIKYLEEDFCYAIECLEEKDNHTGFHTLNFTLVNCSKKCDVHQVYTPSPSDYGCCGTCKNVSCKFHMENGTSVVYAVGSTWHYNCTTYECVKTDEGAIILNYTMVCPPFNETECKMNEGIVKLYNEGCCKICKREERICQKVIIKSVIRKQDCMSQSPINVASCDGKCPSATIYNINIESHLRFCKCCRENGVRNLSVPLYCSGNGTEIMYTLQEPIDCTCQWN.

An N-terminal signal peptide occupies residues 1 to 31; it reads MNIVRKLNLMIPWSIFLLHVLLFSLQEYICA. Residues 121-297 enclose the VWFD 1 domain; sequence GICKTWGQYH…VQTPDDTKCV (177 aa). Cystine bridges form between C123–C257 and C145–C296. N-linked (GlcNAc...) asparagine glycosylation occurs at N144. The TIL 1 domain maps to 390 to 443; sequence CDDSFVHRDCISCCPPTCTFEKQCLGSNLHCLDGCYCPDGLVMDNGTCISLENC. N-linked (GlcNAc...) asparagine glycans are attached at residues N434 and N473. In terms of domain architecture, VWFD 2 spans 481–654; it reads VQCSVVGDSH…NAWRVSSTCF (174 aa). Intrachain disulfides connect C483–C618, C505–C653, and C527–C535. The region spanning 745–800 is the TIL 2 domain; it reads CQKGMLYHHCSSFCLHSCISLSSPEQCSDDCAEGCNCPEGKFYEDTLNFCVPIFHC. Residues N826 and N876 are each glycosylated (N-linked (GlcNAc...) asparagine). One can recognise a VWFD 3 domain in the interval 946–1115; sequence AVCTIYGDRH…SWALGQCESP (170 aa). 2 disulfide bridges follow: C948-C1078 and C992-C999. N1289, N1604, and N2198 each carry an N-linked (GlcNAc...) asparagine glycan. Positions 1534 to 1723 constitute a VWFD 4 domain; sequence CRCSMLSELS…SWEIEKSFEV (190 aa). Cysteines 1536 and 1683 form a disulfide. 4 cysteine pairs are disulfide-bonded: C2261-C2317, C2282-C2331, C2293-C2348, and C2297-C2350. The CTCK domain occupies 2261–2353; it reads CKREERICQK…EPIDCTCQWN (93 aa).

The protein belongs to the otogelin family. Expressed at high levels in fetal inner ear and heart. Low levels in fetal skeletal muscle, kidney, spleen and colon. Not detected in fetal liver, lung, brain, nor in fetal stomach. In adult tissues, highest levels in brain, kidney, heart and retina. Relatively low levels in lung, spleen and duodenum. Not detected in adult skeletal muscle, liver, nor testis.

The protein localises to the secreted. This chain is Otogelin-like protein (OTOGL), found in Homo sapiens (Human).